Reading from the N-terminus, the 274-residue chain is Thiamine kinase (274 aa).

This sequence belongs to the thiamine kinase family.

The catalysed reaction is thiamine + ATP = thiamine phosphate + ADP + H(+). Its pathway is cofactor biosynthesis; thiamine diphosphate biosynthesis; thiamine phosphate from thiamine: step 1/1. Functionally, catalyzes the ATP-dependent phosphorylation of thiamine to thiamine phosphate. Is involved in thiamine salvage. This Escherichia coli O157:H7 (strain EC4115 / EHEC) protein is Thiamine kinase.